The primary structure comprises 1130 residues: Sodium/potassium/calcium exchanger 1 (1130 aa).

Residues 1–419 (MGKLIRMGTQ…DLFSVEDRRQ (419 aa)) are Extracellular-facing. The interval 104–209 (PSIAMEDTPN…SPTATVRDRE (106 aa)) is disordered. The segment covering 125–136 (LKNSYSPTTAGT) has biased composition (polar residues). Basic and acidic residues predominate over residues 170–187 (PRGERKNSSPTHAREKGR). N-linked (GlcNAc...) asparagine glycosylation is found at N176 and N273. The interval 274–295 (ISTTPQGAVPQHTPATSEEQMT) is disordered. The segment covering 286-295 (TPATSEEQMT) has biased composition (polar residues). Residues 420–440 (GWVVLHIFGMMYVFVALAIVC) form a helical membrane-spanning segment. The Cytoplasmic segment spans residues 441–464 (DEYFVPALGVITHKLQISEDVAGA). The stretch at 461-501 (VAGATFMAAGGSAPELFTSLIGVFISHSNVGIGTIVGSAVF) is one Alpha-1 repeat. Residues 465-485 (TFMAAGGSAPELFTSLIGVFI) form a helical membrane-spanning segment. At 486–489 (SHSN) the chain is on the extracellular side. A helical membrane pass occupies residues 490–510 (VGIGTIVGSAVFNILFVIGTC). Over 511–530 (ALFSREILNLTWWPLFRDVS) the chain is Cytoplasmic. The chain crosses the membrane as a helical span at residues 531–551 (FYILDLSMLIVFFLDSFIAWW). E552 is a topological domain (extracellular). A helical transmembrane segment spans residues 553–573 (SLLLLLAYALYVFTMKWNKQI). Over 574 to 938 (ELWVKEQLSR…SLEWPDSRQK (365 aa)) the chain is Cytoplasmic. Residues 598 to 619 (PSEDAVEENEQQDSKKLKLPSV) form a disordered region. S625 bears the Phosphoserine mark. Residues 650–932 (GEARPSKDKQ…ENEEPLSLEW (283 aa)) form a disordered region. Positions 661-675 (SLNQEARVLSQTKAE) are enriched in polar residues. A Phosphothreonine modification is found at T690. Acidic residues predominate over residues 703-715 (QEDDPGCQEDVDE). Residues 730–751 (ETETEGKKDEQEGETEAERKED) show a composition bias toward basic and acidic residues. Acidic residues-rich tracts occupy residues 766–782 (GETE…GETE) and 802–820 (QEGE…GETE). The segment covering 833–855 (AESKEVEQERETEAEGKDKHEGQ) has biased composition (basic and acidic residues). 2 stretches are compositionally biased toward acidic residues: residues 870–880 (GETEANAEDQC) and 896–928 (DGGD…EEPL). A helical transmembrane segment spans residues 939–959 (QAIYLFLLPIVFPLWLTIPDV). Residues 960–966 (RRQESRK) are Extracellular-facing. Residues 967–987 (FFVITFLGSIIWIAMFSYLMV) traverse the membrane as a helical segment. The Cytoplasmic segment spans residues 988 to 1002 (WWAHQVGETIGISEE). The chain crosses the membrane as a helical span at residues 1003-1023 (IMGLTILAAGTSIPDLITSVI). Residues 1010 to 1041 (AAGTSIPDLITSVIVARKGLGDMAVSSSVGSN) form an Alpha-2 repeat. Over 1024–1041 (VARKGLGDMAVSSSVGSN) the chain is Extracellular. Residues 1042 to 1062 (IFDITVGLPVPWLLFSLINAL) form a helical membrane-spanning segment. Residues 1063–1070 (QPVPVSSN) lie on the Cytoplasmic side of the membrane. Residues 1071–1091 (GLFCAIVLLFLMLLFVIFSIA) traverse the membrane as a helical segment. The Extracellular segment spans residues 1092–1099 (SCKWRMNK). Residues 1100-1120 (ILGFTMFLLYFVFLVISVMLE) form a helical membrane-spanning segment. The Cytoplasmic portion of the chain corresponds to 1121-1130 (DRIISCPVSV).

The protein belongs to the Ca(2+):cation antiporter (CaCA) (TC 2.A.19) family. SLC24A subfamily. The uncleaved signal sequence is required for efficient membrane targeting and proper membrane integration and topology.

Its subcellular location is the cell membrane. The enzyme catalyses Ca(2+)(out) + K(+)(out) + 4 Na(+)(in) = Ca(2+)(in) + K(+)(in) + 4 Na(+)(out). Functionally, calcium, potassium:sodium antiporter that transports 1 Ca(2+) and 1 K(+) in exchange for 4 Na(+). Critical component of the visual transduction cascade, controlling the calcium concentration of outer segments during light and darkness. Light causes a rapid lowering of cytosolic free calcium in the outer segment of both retinal rod and cone photoreceptors and the light-induced lowering of calcium is caused by extrusion via this protein which plays a key role in the process of light adaptation. The chain is Sodium/potassium/calcium exchanger 1 from Mus musculus (Mouse).